The primary structure comprises 159 residues: Protein-export protein SecB (159 aa).

The protein belongs to the SecB family. Homotetramer, a dimer of dimers. One homotetramer interacts with 1 SecA dimer.

The protein localises to the cytoplasm. Functionally, one of the proteins required for the normal export of preproteins out of the cell cytoplasm. It is a molecular chaperone that binds to a subset of precursor proteins, maintaining them in a translocation-competent state. It also specifically binds to its receptor SecA. This chain is Protein-export protein SecB, found in Hahella chejuensis (strain KCTC 2396).